The sequence spans 724 residues: Methionine--tRNA ligase (724 aa).

Residues 11–21 (PYANGPIHAGH) carry the 'HIGH' region motif. Zn(2+) contacts are provided by C143, C146, C156, and C159. The 'KMSKS' region signature appears at 344-348 (KFSTS). T347 is an ATP binding site. The 101-residue stretch at 624 to 724 (EFSKIDLRIG…KEVKLGAKVR (101 aa)) folds into the tRNA-binding domain.

This sequence belongs to the class-I aminoacyl-tRNA synthetase family. MetG type 1 subfamily. Homodimer. The cofactor is Zn(2+).

It localises to the cytoplasm. The catalysed reaction is tRNA(Met) + L-methionine + ATP = L-methionyl-tRNA(Met) + AMP + diphosphate. Is required not only for elongation of protein synthesis but also for the initiation of all mRNA translation through initiator tRNA(fMet) aminoacylation. In Pyrococcus furiosus (strain ATCC 43587 / DSM 3638 / JCM 8422 / Vc1), this protein is Methionine--tRNA ligase.